The primary structure comprises 872 residues: G-type lectin S-receptor-like serine/threonine-protein kinase At5g35370 (872 aa).

Positions 1–26 are cleaved as a signal peptide; the sequence is MKSTFLLLLLLLSLNLLFVFVSCASS. The Extracellular segment spans residues 27–443; that stretch reads IEFVYPNFTA…NNNRGGSSFP (417 aa). N-linked (GlcNAc...) asparagine glycosylation is found at asparagine 33, asparagine 148, and asparagine 239. Positions 35 to 156 constitute a Bulb-type lectin domain; sequence TASNLRFVDS…LNVSLWESFD (122 aa). The EGF-like; atypical domain maps to 283-322; it reads PMDSCQIPFVCGKLGLCNLDNASENQSCSCPDEMRMDAGK. Disulfide bonds link cysteine 287-cysteine 299 and cysteine 293-cysteine 310. Asparagine 303, asparagine 307, asparagine 342, asparagine 379, and asparagine 389 each carry an N-linked (GlcNAc...) asparagine glycan. Residues 338–423 enclose the PAN domain; it reads CEARNISYLE…HDLIGYVKLS (86 aa). Intrachain disulfides connect cysteine 372–cysteine 394 and cysteine 376–cysteine 382. Residues 444–464 form a helical membrane-spanning segment; it reads VIALVLLPCSGFFLLIALGLL. Residues 465 to 872 lie on the Cytoplasmic side of the membrane; the sequence is WWRRCAVMRY…IASQEVSGPR (408 aa). The Protein kinase domain maps to 515 to 814; that stretch reads ENFKMQIGSG…GSIPLGNPRM (300 aa). ATP is bound by residues 521 to 529 and lysine 543; that span reads IGSGGFGSV. The interval 603-620 is caM-binding; it reads GNGPVLEWQERFDIALGT. The active-site Proton acceptor is the aspartate 639. A Phosphoserine modification is found at serine 656. The residue at position 673 (threonine 673) is a Phosphothreonine. Serine 716 and serine 859 each carry phosphoserine. The disordered stretch occupies residues 836–872; sequence QNGESETMVFHRRESSNSGGSRQSASYIASQEVSGPR. Residues 851 to 861 are compositionally biased toward low complexity; it reads SNSGGSRQSAS. Polar residues predominate over residues 862–872; that stretch reads YIASQEVSGPR.

The protein belongs to the protein kinase superfamily. Ser/Thr protein kinase family.

Its subcellular location is the cell membrane. The enzyme catalyses L-seryl-[protein] + ATP = O-phospho-L-seryl-[protein] + ADP + H(+). The catalysed reaction is L-threonyl-[protein] + ATP = O-phospho-L-threonyl-[protein] + ADP + H(+). This is G-type lectin S-receptor-like serine/threonine-protein kinase At5g35370 from Arabidopsis thaliana (Mouse-ear cress).